The chain runs to 337 residues: MDDLKSIIGKVATGASLSRDEAASAFDAMMSGEATPSQMGGLLMALRVRGETVDEITGAVAAMRSKMLTVTAPPDAVDIVGTGGDGSGSVNVSTCASFIVSGAGVPVAKHGNRALSSRSGAADVLASLGVRIDLRPEQVGRCVRECGIGFMFAPAHHPAMKNVGPTRVELATRTIFNLLGPLSNPAGVKRQMVGVFSRQWVQPLAQVLKNLGSESAWVVHGSDGLDEITLTGPTFVSSLHNGEIRNFEVTPEEAGLPRCEPGALKGGDADANAIALQSVLNGKPSAYRDVALMNAAAALVVAGRAKDLKEGVALGAKSLDSGAANARLKHLIAVSNG.

5-phospho-alpha-D-ribose 1-diphosphate contacts are provided by residues Gly81, 84–85, Ser89, 91–94, 109–117, and Ala121; these read GD, NVST, and KHGNRALSS. Gly81 lines the anthranilate pocket. Residue Ser93 participates in Mg(2+) binding. Asn112 is an anthranilate binding site. Arg167 contacts anthranilate. Asp226 and Glu227 together coordinate Mg(2+).

This sequence belongs to the anthranilate phosphoribosyltransferase family. As to quaternary structure, homodimer. It depends on Mg(2+) as a cofactor.

The enzyme catalyses N-(5-phospho-beta-D-ribosyl)anthranilate + diphosphate = 5-phospho-alpha-D-ribose 1-diphosphate + anthranilate. Its pathway is amino-acid biosynthesis; L-tryptophan biosynthesis; L-tryptophan from chorismate: step 2/5. Functionally, catalyzes the transfer of the phosphoribosyl group of 5-phosphorylribose-1-pyrophosphate (PRPP) to anthranilate to yield N-(5'-phosphoribosyl)-anthranilate (PRA). This Bradyrhizobium diazoefficiens (strain JCM 10833 / BCRC 13528 / IAM 13628 / NBRC 14792 / USDA 110) protein is Anthranilate phosphoribosyltransferase.